A 37-amino-acid polypeptide reads, in one-letter code: Cytochrome b6-f complex subunit 5 (37 aa).

A helical transmembrane segment spans residues 5–25; that stretch reads LLSGIVLGLIPITLAGLFVTA.

This sequence belongs to the PetG family. The 4 large subunits of the cytochrome b6-f complex are cytochrome b6, subunit IV (17 kDa polypeptide, PetD), cytochrome f and the Rieske protein, while the 4 small subunits are PetG, PetL, PetM and PetN. The complex functions as a dimer.

It is found in the plastid. Its subcellular location is the chloroplast thylakoid membrane. Its function is as follows. Component of the cytochrome b6-f complex, which mediates electron transfer between photosystem II (PSII) and photosystem I (PSI), cyclic electron flow around PSI, and state transitions. PetG is required for either the stability or assembly of the cytochrome b6-f complex. This chain is Cytochrome b6-f complex subunit 5, found in Chaetosphaeridium globosum (Charophycean green alga).